The following is a 258-amino-acid chain: Isoprenyl transferase (258 aa).

Asp-38 is a catalytic residue. Asp-38 provides a ligand contact to Mg(2+). Residues 39 to 42 (GNGR), Trp-43, Arg-51, His-55, and 83 to 85 (STE) contribute to the substrate site. The Proton acceptor role is filled by Asn-86. Substrate is bound by residues Trp-87, Arg-89, Arg-206, and 212–214 (RIS). Position 225 (Glu-225) interacts with Mg(2+).

Belongs to the UPP synthase family. In terms of assembly, homodimer. Mg(2+) is required as a cofactor.

In terms of biological role, catalyzes the condensation of isopentenyl diphosphate (IPP) with allylic pyrophosphates generating different type of terpenoids. The polypeptide is Isoprenyl transferase (Bacillus thuringiensis subsp. konkukian (strain 97-27)).